Consider the following 408-residue polypeptide: uncharacterized protein (408 aa).

2 disordered regions span residues 218–265 and 367–408; these read EPTA…TSER and MESE…ETPN. Residues 369–379 are compositionally biased toward low complexity; that stretch reads SEVINSSSSTS. Residues 394–408 show a composition bias toward acidic residues; that stretch reads IVEEVPETAENETPN.

It to C.elegans C05E11.1.

This is an uncharacterized protein from Arabidopsis thaliana (Mouse-ear cress).